Reading from the N-terminus, the 167-residue chain is uncharacterized protein (167 aa).

The interval 140–167 is disordered; it reads SSEEKKKKKKKKKEKSLHTEREKKKKKF. Over residues 145-154 the composition is skewed to basic residues; it reads KKKKKKKKEK.

This is an uncharacterized protein from Saccharomyces cerevisiae (strain ATCC 204508 / S288c) (Baker's yeast).